The primary structure comprises 186 residues: Elongation factor P (186 aa).

This sequence belongs to the elongation factor P family.

The protein localises to the cytoplasm. The protein operates within protein biosynthesis; polypeptide chain elongation. In terms of biological role, involved in peptide bond synthesis. Stimulates efficient translation and peptide-bond synthesis on native or reconstituted 70S ribosomes in vitro. Probably functions indirectly by altering the affinity of the ribosome for aminoacyl-tRNA, thus increasing their reactivity as acceptors for peptidyl transferase. The chain is Elongation factor P from Prochlorococcus marinus (strain MIT 9303).